We begin with the raw amino-acid sequence, 136 residues long: Cancer/testis antigen 62 (136 aa).

The disordered stretch occupies residues 1–22 (MMHTTSYRRLSPPHLTDQPSAY).

Testis specific. Expressed in cancer cell lines.

The polypeptide is Cancer/testis antigen 62 (CT62) (Homo sapiens (Human)).